Here is a 385-residue protein sequence, read N- to C-terminus: Proteinase-activated receptor 4 (385 aa).

The N-terminal stretch at 1-17 is a signal peptide; that stretch reads MWGRLLLWPLVLGFSLS. A propeptide spans 18–47 (removed for receptor activation); that stretch reads GGTQTPSVYDESGSTGGGDDSTPSILPAPR. The segment at 21–42 is disordered; the sequence is QTPSVYDESGSTGGGDDSTPSI. Topologically, residues 48–82 are extracellular; it reads GYPGQVCANDSDTLELPDSSRALLLGWVPTRLVPA. N-linked (GlcNAc...) asparagine glycosylation occurs at asparagine 56. The helical transmembrane segment at 83–103 threads the bilayer; sequence LYGLVLVVGLPANGLALWVLA. Over 104 to 108 the chain is Cytoplasmic; that stretch reads TQAPR. Residues 109-129 traverse the membrane as a helical segment; it reads LPSTMLLMNLAAADLLLALAL. Residues 130–151 lie on the Extracellular side of the membrane; sequence PPRIAYHLRGQRWPFGEAACRL. Cysteine 149 and cysteine 228 are joined by a disulfide. The helical transmembrane segment at 152-172 threads the bilayer; that stretch reads ATAALYGHMYGSVLLLAAVSL. Topologically, residues 173–192 are cytoplasmic; it reads DRYLALVHPLRARALRGRRL. Residues 193-213 form a helical membrane-spanning segment; the sequence is ALGLCMAAWLMAAALALPLTL. Over 214–247 the chain is Extracellular; that stretch reads QRQTFRLARSDRVLCHDALPLDAQASHWQPAFTC. Residues 248 to 268 traverse the membrane as a helical segment; it reads LALLGCFLPLLAMLLCYGATL. At 269–283 the chain is on the cytoplasmic side; that stretch reads HTLAASGRRYGHALR. Residues 284–304 form a helical membrane-spanning segment; it reads LTAVVLASAVAFFVPSNLLLL. Residues 305–319 lie on the Extracellular side of the membrane; the sequence is LHYSDPSPSAWGNLY. A helical transmembrane segment spans residues 320-343; the sequence is GAYVPSLALSTLNSCVDPFIYYYV. Topologically, residues 344–385 are cytoplasmic; that stretch reads SAEFRDKVRAGLFQRSPGDTVASKASAEGGSRGMGTHSSLLQ. Residues 362-385 are disordered; that stretch reads DTVASKASAEGGSRGMGTHSSLLQ.

It belongs to the G-protein coupled receptor 1 family. A proteolytic cleavage generates a new N-terminus that functions as a tethered ligand. As to expression, widely expressed, with highest levels in lung, pancreas, thyroid, testis and small intestine. Not expressed in brain, kidney, spinal cord and peripheral blood leukocytes. Also detected in platelets.

The protein localises to the cell membrane. Activated upon interaction by mucunain, a cowhage (Mucuna pruriens) plant cysteine proteinase. In terms of biological role, receptor for activated thrombin or trypsin coupled to G proteins that stimulate phosphoinositide hydrolysis. May play a role in platelets activation. The polypeptide is Proteinase-activated receptor 4 (F2RL3) (Homo sapiens (Human)).